A 271-amino-acid polypeptide reads, in one-letter code: MNTPEDSTLGREVAYPSGYDPSLLFPIPRAAGRQAIGLTGDLPFIGRDRWHAYELSWLDAQGKPCVATATLHVPCDSPSLIESKSLKLYLNSLNATRFNSAEAVRTRIATDLSTRAGADVAVEFGLPPIDAVGEGESIDALDLSIDDYGPPNAAYLCAHAQPVVEEVLTSALLKSNCPVTGQPDWASVTLRYRGAPIDREGLLRYLVSFRDHAEFHEQCVERIFNDVLTQCAPQWLVVEARYTRRGGLDINPLRSSASVPTPLSIFRDLRQ.

Isoleucine 81 to serine 83 is a binding site for substrate. Residue serine 83 to lysine 84 participates in NADPH binding. Cysteine 177 serves as the catalytic Thioimide intermediate. Catalysis depends on aspartate 184, which acts as the Proton donor. Histidine 216 to glutamate 217 is a substrate binding site. Arginine 245 to glycine 246 serves as a coordination point for NADPH.

The protein belongs to the GTP cyclohydrolase I family. QueF type 2 subfamily. As to quaternary structure, homodimer.

The protein resides in the cytoplasm. It carries out the reaction 7-aminomethyl-7-carbaguanine + 2 NADP(+) = 7-cyano-7-deazaguanine + 2 NADPH + 3 H(+). It participates in tRNA modification; tRNA-queuosine biosynthesis. Functionally, catalyzes the NADPH-dependent reduction of 7-cyano-7-deazaguanine (preQ0) to 7-aminomethyl-7-deazaguanine (preQ1). The protein is NADPH-dependent 7-cyano-7-deazaguanine reductase of Xanthomonas axonopodis pv. citri (strain 306).